A 127-amino-acid polypeptide reads, in one-letter code: Photosystem II reaction center Psb28 protein (127 aa).

Residues 107–127 (GLGYSQNQNSDQTDGDANAEA) form a disordered region. Polar residues predominate over residues 109-118 (GYSQNQNSDQ).

It belongs to the Psb28 family. As to quaternary structure, part of the photosystem II complex.

It is found in the cellular thylakoid membrane. The sequence is that of Photosystem II reaction center Psb28 protein from Parasynechococcus marenigrum (strain WH8102).